The sequence spans 832 residues: Translation initiation factor IF-2 (832 aa).

Residues 1–10 (MLMSDVEKFG) are compositionally biased toward basic and acidic residues. Disordered regions lie at residues 1-87 (MLMS…SRSA), 120-148 (RDEE…PAAA), and 163-201 (IAPG…GGGG). Residues 11 to 20 (GDCGSSGGSG) show a composition bias toward gly residues. Polar residues-rich tracts occupy residues 29–42 (RAST…STGG) and 71–87 (SPYT…SRSA). The region spanning 331–500 (PRPPVVTVMG…LLLAEMLELR (170 aa)) is the tr-type G domain. Residues 340-347 (GHVDHGKT) are G1. 340–347 (GHVDHGKT) provides a ligand contact to GTP. The segment at 365 to 369 (GITQH) is G2. A G3 region spans residues 386–389 (DTPG). GTP is bound by residues 386–390 (DTPGH) and 440–443 (NKID). Residues 440-443 (NKID) form a G4 region. The tract at residues 476–478 (SAK) is G5.

This sequence belongs to the TRAFAC class translation factor GTPase superfamily. Classic translation factor GTPase family. IF-2 subfamily.

Its subcellular location is the cytoplasm. Its function is as follows. One of the essential components for the initiation of protein synthesis. Protects formylmethionyl-tRNA from spontaneous hydrolysis and promotes its binding to the 30S ribosomal subunits. Also involved in the hydrolysis of GTP during the formation of the 70S ribosomal complex. The protein is Translation initiation factor IF-2 of Anaplasma marginale (strain St. Maries).